We begin with the raw amino-acid sequence, 340 residues long: Undecaprenyl-phosphate 4-deoxy-4-formamido-L-arabinose transferase (340 aa).

2 helical membrane-spanning segments follow: residues 235 to 255 and 269 to 289; these read LSIV…ALIF and LFVL…GMGL.

It belongs to the glycosyltransferase 2 family.

The protein localises to the cell inner membrane. It catalyses the reaction UDP-4-deoxy-4-formamido-beta-L-arabinose + di-trans,octa-cis-undecaprenyl phosphate = 4-deoxy-4-formamido-alpha-L-arabinopyranosyl di-trans,octa-cis-undecaprenyl phosphate + UDP. The protein operates within glycolipid biosynthesis; 4-amino-4-deoxy-alpha-L-arabinose undecaprenyl phosphate biosynthesis; 4-amino-4-deoxy-alpha-L-arabinose undecaprenyl phosphate from UDP-4-deoxy-4-formamido-beta-L-arabinose and undecaprenyl phosphate: step 1/2. It functions in the pathway bacterial outer membrane biogenesis; lipopolysaccharide biosynthesis. Its function is as follows. Catalyzes the transfer of 4-deoxy-4-formamido-L-arabinose from UDP to undecaprenyl phosphate. The modified arabinose is attached to lipid A and is required for resistance to polymyxin and cationic antimicrobial peptides. The protein is Undecaprenyl-phosphate 4-deoxy-4-formamido-L-arabinose transferase of Pseudomonas fluorescens (strain Pf0-1).